A 346-amino-acid chain; its full sequence is Phenylalanine--tRNA ligase alpha subunit (346 aa).

Mg(2+) is bound at residue Glu-258.

It belongs to the class-II aminoacyl-tRNA synthetase family. Phe-tRNA synthetase alpha subunit type 1 subfamily. In terms of assembly, tetramer of two alpha and two beta subunits. Mg(2+) is required as a cofactor.

Its subcellular location is the cytoplasm. The enzyme catalyses tRNA(Phe) + L-phenylalanine + ATP = L-phenylalanyl-tRNA(Phe) + AMP + diphosphate + H(+). This chain is Phenylalanine--tRNA ligase alpha subunit, found in Protochlamydia amoebophila (strain UWE25).